Consider the following 526-residue polypeptide: Carotenoid cleavage oxygenase 1 (526 aa).

The tract at residues 1 to 33 (MAEYVFSDAPKDSHGNGVKDAVPGKQPEELPPA) is disordered. Y133 and K164 together coordinate piceatannol. Residues Y133 and K164 each coordinate trans-resveratrol. The Fe cation site is built by H197, H248, and H313. E383 lines the piceatannol pocket. Trans-resveratrol is bound at residue E383. A Fe cation-binding site is contributed by H510.

This sequence belongs to the carotenoid oxygenase family. The cofactor is Fe(2+).

It catalyses the reaction trans-resveratrol + O2 = 3,5-dihydroxybenzaldehyde + 4-hydroxybenzaldehyde. It carries out the reaction piceatannol + O2 = 3,5-dihydroxybenzaldehyde + 3,4-dihydroxybenzaldehyde. Dioxygenase that cleaves the interphenyl C-alpha-C-beta double bond of resveratrol to yield 3,5-dihydroxybenzaldehyde and 4-hydroxybenzaldehyde. Also cleaves piceatannol, a compound that differs from resveratrol only in the occurrence of an additional hydroxyl group, which leads to the production of 3,4-dihydroxybenzaldehyde and 3,5-hydroxybenzaldehyde. Is not able to cleave trans-stilbene, 4-monohydroxy-trans-stilbene, 3,5-dihydroxy-trans-stilbene (pinosylvin), trismethoxy-resveratrol, and 3,3',5-trihydroxy-4'-methoxystilbene-3-O-beta-D-glucoside. Is not involved in carotenoid metabolism. The chain is Carotenoid cleavage oxygenase 1 from Neurospora crassa (strain ATCC 24698 / 74-OR23-1A / CBS 708.71 / DSM 1257 / FGSC 987).